Reading from the N-terminus, the 244-residue chain is MMNLLSSDGVQVLPRPFTLNERRREVRSFVLRQGHFTPAQKRAFDHYWPRFGVDFIGQLRDLDVLFGRSAPKVLEVGFGNGAALRFAAQHEPRYDYIGIEVYAPGVGRLLNGLAEDGSRHVRLYHYDAVEVLNKEIADGALDEIRIYFPDPWHKKRHHKRRLIQPLFATLLVRKLRVGGCLHMATDWADYAEQMWDVLDATPGLVNRAGLRGQVPCPDWRVQTRFERRGQNLGHRVWNLLYDRV.

Residues Glu75, Glu100, Asp127, and Asp150 each coordinate S-adenosyl-L-methionine. Residue Asp150 is part of the active site. Residues Lys154, Asp186, and 223–226 (TRFE) contribute to the substrate site.

Belongs to the class I-like SAM-binding methyltransferase superfamily. TrmB family.

It catalyses the reaction guanosine(46) in tRNA + S-adenosyl-L-methionine = N(7)-methylguanosine(46) in tRNA + S-adenosyl-L-homocysteine. It participates in tRNA modification; N(7)-methylguanine-tRNA biosynthesis. Functionally, catalyzes the formation of N(7)-methylguanine at position 46 (m7G46) in tRNA. In Xylella fastidiosa (strain M12), this protein is tRNA (guanine-N(7)-)-methyltransferase.